Consider the following 331-residue polypeptide: MEPMNLGSPVNSPGSNQTQYLPPFLLGDPQGITPHKNTLSPKTGRSNISFATSPGGSSPHELNRSALSTRTLFAAQGGAHTAVGANSSTTAHGQTHSHHQTGPPTQGLFDSLREQSVTPKKKNHLGMLQLQSPNQSYQSSYHTNDSFAPGAPNAINASMRALCSPLGATASPAGGLGTSVTTGGNSRLSDFWVTIFGFPPGAGSMVLQHFTVCGTIVDVVHAPQNGNWMYVRYSSRIESDKALNYNEKIIAGNVMVGVSRCTDRSVIDKENIGSVPNAEIGDPPTSPSAIRPFSQQSYKLARKDNIISPQKDVPQKSSGLMDKAMDLIFGW.

2 disordered regions span residues 1-63 (MEPM…HELN) and 79-110 (AHTA…GLFD). Composition is skewed to polar residues over residues 8 to 20 (SPVN…QTQY), 35 to 56 (HKNT…SPGG), and 84 to 104 (GANS…TGPP). The RRM Nup35-type domain maps to 187 to 268 (RLSDFWVTIF…SRCTDRSVID (82 aa)).

Belongs to the Nup35 family. Interacts with Nup154.

The protein localises to the nucleus. The protein resides in the nuclear pore complex. Functionally, functions as a component of the nuclear pore complex (NPC). May have a role in the organization of the inner nuclear membrane proteins at the nuclear envelope together with Nup154. The polypeptide is Nucleoporin Nup35 (Drosophila melanogaster (Fruit fly)).